Here is a 228-residue protein sequence, read N- to C-terminus: ATP-dependent dethiobiotin synthetase BioD (228 aa).

12 to 17 contributes to the ATP binding site; that stretch reads EIGKTT. Position 16 (threonine 16) interacts with Mg(2+). Lysine 37 is an active-site residue. A substrate-binding site is contributed by serine 41. ATP contacts are provided by residues aspartate 54, 116 to 119, and 205 to 207; these read EGAG and PRL. Residues aspartate 54 and glutamate 116 each coordinate Mg(2+).

It belongs to the dethiobiotin synthetase family. In terms of assembly, homodimer. Requires Mg(2+) as cofactor.

Its subcellular location is the cytoplasm. The enzyme catalyses (7R,8S)-7,8-diammoniononanoate + CO2 + ATP = (4R,5S)-dethiobiotin + ADP + phosphate + 3 H(+). It participates in cofactor biosynthesis; biotin biosynthesis; biotin from 7,8-diaminononanoate: step 1/2. Functionally, catalyzes a mechanistically unusual reaction, the ATP-dependent insertion of CO2 between the N7 and N8 nitrogen atoms of 7,8-diaminopelargonic acid (DAPA, also called 7,8-diammoniononanoate) to form a ureido ring. This chain is ATP-dependent dethiobiotin synthetase BioD, found in Pseudomonas aeruginosa (strain UCBPP-PA14).